A 179-amino-acid chain; its full sequence is ATP synthase subunit delta (179 aa).

Belongs to the ATPase delta chain family. F-type ATPases have 2 components, F(1) - the catalytic core - and F(0) - the membrane proton channel. F(1) has five subunits: alpha(3), beta(3), gamma(1), delta(1), epsilon(1). F(0) has three main subunits: a(1), b(2) and c(10-14). The alpha and beta chains form an alternating ring which encloses part of the gamma chain. F(1) is attached to F(0) by a central stalk formed by the gamma and epsilon chains, while a peripheral stalk is formed by the delta and b chains.

Its subcellular location is the cell membrane. Its function is as follows. F(1)F(0) ATP synthase produces ATP from ADP in the presence of a proton or sodium gradient. F-type ATPases consist of two structural domains, F(1) containing the extramembraneous catalytic core and F(0) containing the membrane proton channel, linked together by a central stalk and a peripheral stalk. During catalysis, ATP synthesis in the catalytic domain of F(1) is coupled via a rotary mechanism of the central stalk subunits to proton translocation. Functionally, this protein is part of the stalk that links CF(0) to CF(1). It either transmits conformational changes from CF(0) to CF(1) or is implicated in proton conduction. The polypeptide is ATP synthase subunit delta (Bacillus sp. (strain PS3)).